Reading from the N-terminus, the 683-residue chain is Eukaryotic translation initiation factor 3 subunit B (683 aa).

The tract at residues 1 to 25 (MAKKKGEEQDFEEEPNFDDPEGFVD) is disordered. A compositionally biased stretch (acidic residues) spans 9–25 (QDFEEEPNFDDPEGFVD). The 85-residue stretch at 49-133 (NVIVVDNIPV…YTLLVNRFAD (85 aa)) folds into the RRM domain. WD repeat units follow at residues 199-238 (KRERFTDTYVKWSPKGTYIVTFHKQGVVVWGGSSFVKVNK), 240-279 (AHSNAQFVDISPCEQYLVTYGPNGQKIVIWDIRTGAEKRT), 283-321 (DGMSNASMLRWSHDDRYVARLVDSQIQIYDTTTFFLLDM), 324-359 (IRVEGIRNFSWSPTDNIIAYWVAEEVDVPAKVTLMA), 435-477 (EVKE…EPVL), and 522-567 (GDHY…KRVN). A coiled-coil region spans residues 611 to 638 (MTRASKELIEKRAKLREQFTEYRSKRVK).

Belongs to the eIF-3 subunit B family. As to quaternary structure, component of the eukaryotic translation initiation factor 3 (eIF-3) complex.

Its subcellular location is the cytoplasm. Its function is as follows. RNA-binding component of the eukaryotic translation initiation factor 3 (eIF-3) complex, which is involved in protein synthesis of a specialized repertoire of mRNAs and, together with other initiation factors, stimulates binding of mRNA and methionyl-tRNAi to the 40S ribosome. The eIF-3 complex specifically targets and initiates translation of a subset of mRNAs involved in cell proliferation. In Anopheles gambiae (African malaria mosquito), this protein is Eukaryotic translation initiation factor 3 subunit B.